The sequence spans 456 residues: Maturase-like protein 1 (456 aa).

This sequence to group II intron maturases.

It is found in the plastid. Could be required for group III intron excision. The polypeptide is Maturase-like protein 1 (mat1) (Euglena longa (Euglenophycean alga)).